A 77-amino-acid chain; its full sequence is Large ribosomal subunit protein eL20 (77 aa).

This sequence belongs to the eukaryotic ribosomal protein eL20 family. Part of the 50S ribosomal subunit. Binds 23S rRNA.

In Pyrococcus horikoshii (strain ATCC 700860 / DSM 12428 / JCM 9974 / NBRC 100139 / OT-3), this protein is Large ribosomal subunit protein eL20.